We begin with the raw amino-acid sequence, 118 residues long: CLAVATA3/ESR (CLE)-related protein 12 (118 aa).

The signal sequence occupies residues 1–35 (MLRISSSSSMALKFSQILFIVLWLSLFFLLLHHLY). Basic and acidic residues-rich tracts occupy residues 75–91 (TPFH…RSGE) and 98–108 (IDPRYGVEKRR). The disordered stretch occupies residues 75 to 118 (TPFHSRDNSRHNHRSGEQYDGDEIDPRYGVEKRRVPSGPNPLHH). A hydroxyproline mark is found at Pro110 and Pro113. A glycan (O-linked (Ara...) hydroxyproline) is linked at Pro113.

The protein belongs to the CLV3/ESR signal peptide family. Post-translationally, the O-glycosylation (arabinosylation) of the hydroxyproline Pro-113 enhances binding affinity of the CLE12p peptide for its receptor. Mostly expressed in seedlings, roots, flowers, stems and apex, and, to a lower extent, in leaves and siliques.

It is found in the secreted. It localises to the extracellular space. In terms of biological role, extracellular signal peptide that regulates cell fate. Represses root apical meristem maintenance. The polypeptide is CLAVATA3/ESR (CLE)-related protein 12 (Arabidopsis thaliana (Mouse-ear cress)).